Here is a 914-residue protein sequence, read N- to C-terminus: Beta-mannosidase A (914 aa).

The signal sequence occupies residues Met-1 to Gly-20. Residues Asn-39, Asn-79, Asn-230, Asn-265, Asn-299, Asn-309, and Asn-330 are each glycosylated (N-linked (GlcNAc...) asparagine). Residue Glu-462 is the Proton donor of the active site. N-linked (GlcNAc...) asparagine glycosylation is found at Asn-591, Asn-614, Asn-641, Asn-721, Asn-744, Asn-773, Asn-784, and Asn-909.

The protein belongs to the glycosyl hydrolase 2 family. Beta-mannosidase A subfamily. As to quaternary structure, homodimer.

Its subcellular location is the secreted. It catalyses the reaction Hydrolysis of terminal, non-reducing beta-D-mannose residues in beta-D-mannosides.. It participates in glycan metabolism; N-glycan degradation. In terms of biological role, exoglycosidase that cleaves the single beta-linked mannose residue from the non-reducing end of beta-mannosidic oligosaccharides of various complexity and length. Involved in the degradation of polymeric mannan and galactomannan. This chain is Beta-mannosidase A (mndA), found in Aspergillus oryzae (strain ATCC 42149 / RIB 40) (Yellow koji mold).